The sequence spans 264 residues: Indole-3-glycerol phosphate synthase (264 aa).

It belongs to the TrpC family.

The catalysed reaction is 1-(2-carboxyphenylamino)-1-deoxy-D-ribulose 5-phosphate + H(+) = (1S,2R)-1-C-(indol-3-yl)glycerol 3-phosphate + CO2 + H2O. Its pathway is amino-acid biosynthesis; L-tryptophan biosynthesis; L-tryptophan from chorismate: step 4/5. The protein is Indole-3-glycerol phosphate synthase of Carboxydothermus hydrogenoformans (strain ATCC BAA-161 / DSM 6008 / Z-2901).